The primary structure comprises 762 residues: 5-methyltetrahydropteroyltriglutamate--homocysteine methyltransferase (762 aa).

Residues 17-20 (REWK) and Lys111 each bind 5-methyltetrahydropteroyltri-L-glutamate. Residues 435–437 (IGS) and Glu488 contribute to the L-homocysteine site. Residues 435–437 (IGS) and Glu488 contribute to the L-methionine site. 5-methyltetrahydropteroyltri-L-glutamate-binding positions include 519 to 520 (RC) and Trp565. Asp603 provides a ligand contact to L-homocysteine. Asp603 is a binding site for L-methionine. Glu609 contacts 5-methyltetrahydropteroyltri-L-glutamate. Residues His645, Cys647, and Glu669 each coordinate Zn(2+). Catalysis depends on His698, which acts as the Proton donor. Cys730 lines the Zn(2+) pocket.

It belongs to the vitamin-B12 independent methionine synthase family. Zn(2+) serves as cofactor.

It carries out the reaction 5-methyltetrahydropteroyltri-L-glutamate + L-homocysteine = tetrahydropteroyltri-L-glutamate + L-methionine. It participates in amino-acid biosynthesis; L-methionine biosynthesis via de novo pathway; L-methionine from L-homocysteine (MetE route): step 1/1. Its function is as follows. Catalyzes the transfer of a methyl group from 5-methyltetrahydrofolate to homocysteine resulting in methionine formation. In Bacillus anthracis (strain CDC 684 / NRRL 3495), this protein is 5-methyltetrahydropteroyltriglutamate--homocysteine methyltransferase.